The primary structure comprises 189 residues: GTPase HRas (189 aa).

An N-acetylmethionine modification is found at Met1. Thr2 carries the N-acetylthreonine; in GTPase HRas, N-terminally processed modification. Residue 10–17 (GAGGVGKS) participates in GTP binding. Positions 32 to 40 (YDPTIEDSY) match the Effector region motif. GTP contacts are provided by residues 57-61 (DTAGQ) and 116-119 (NKCD). Cys118 carries the post-translational modification S-nitrosocysteine. A hypervariable region region spans residues 166-185 (HKLRKLNPPDESGPGCMNCK). S-palmitoyl cysteine attachment occurs at residues Cys181 and Cys184. Residue Cys186 is modified to Cysteine methyl ester. The S-farnesyl cysteine moiety is linked to residue Cys186. A propeptide spans 187–189 (VIS) (removed in mature form).

Belongs to the small GTPase superfamily. Ras family. Post-translationally, palmitoylated by the ZDHHC9-GOLGA7 complex. A continuous cycle of de- and re-palmitoylation regulates rapid exchange between plasma membrane and Golgi.

Its subcellular location is the cell membrane. The protein resides in the golgi apparatus membrane. It carries out the reaction GTP + H2O = GDP + phosphate + H(+). Alternates between an inactive form bound to GDP and an active form bound to GTP. Activated by a guanine nucleotide-exchange factor (GEF) and inactivated by a GTPase-activating protein (GAP). In terms of biological role, ras proteins bind GDP/GTP and possess intrinsic GTPase activity. In Gallus gallus (Chicken), this protein is GTPase HRas (HRAS).